The chain runs to 418 residues: UDP-N-acetylglucosamine 1-carboxyvinyltransferase (418 aa).

Phosphoenolpyruvate is bound at residue 22–23 (KN). Residue Arg-93 coordinates UDP-N-acetyl-alpha-D-glucosamine. The active-site Proton donor is the Cys-117. Cys-117 carries the post-translational modification 2-(S-cysteinyl)pyruvic acid O-phosphothioketal. Residues Asp-305 and Val-327 each contribute to the UDP-N-acetyl-alpha-D-glucosamine site.

The protein belongs to the EPSP synthase family. MurA subfamily.

It is found in the cytoplasm. It carries out the reaction phosphoenolpyruvate + UDP-N-acetyl-alpha-D-glucosamine = UDP-N-acetyl-3-O-(1-carboxyvinyl)-alpha-D-glucosamine + phosphate. It functions in the pathway cell wall biogenesis; peptidoglycan biosynthesis. Its function is as follows. Cell wall formation. Adds enolpyruvyl to UDP-N-acetylglucosamine. This chain is UDP-N-acetylglucosamine 1-carboxyvinyltransferase, found in Halorhodospira halophila (strain DSM 244 / SL1) (Ectothiorhodospira halophila (strain DSM 244 / SL1)).